The sequence spans 458 residues: UDP-N-acetylmuramoylalanine--D-glutamate ligase (458 aa).

Residue 124 to 130 (GSDGKTT) participates in ATP binding.

The protein belongs to the MurCDEF family.

The protein localises to the cytoplasm. The enzyme catalyses UDP-N-acetyl-alpha-D-muramoyl-L-alanine + D-glutamate + ATP = UDP-N-acetyl-alpha-D-muramoyl-L-alanyl-D-glutamate + ADP + phosphate + H(+). It participates in cell wall biogenesis; peptidoglycan biosynthesis. Its function is as follows. Cell wall formation. Catalyzes the addition of glutamate to the nucleotide precursor UDP-N-acetylmuramoyl-L-alanine (UMA). The chain is UDP-N-acetylmuramoylalanine--D-glutamate ligase from Clostridium perfringens (strain 13 / Type A).